A 351-amino-acid chain; its full sequence is MSALARVLVVDDSPTMRGLISAVLKADPEVEVVGQAGNAMEARAAIKQLNPDVVTLDIEMPEMNGLEFLEKIMRLRPMPVIMVSSLTHRGADASLAALEIGAFDCVGKPAPGDARPFGDLADKVKAAARSQHAAYRATRPETAAAPQPVPMSEYRAGRKVVAIGSSTGGVEALIAVLQKFPANCPPTVITQHMPPTFTKSFAERLNRICAPVVEEATDGARLQTGKIYLAPGGERHLQIANRSAPCCRLLDRDPVNGHRPSVDVLFDSVAELAGRNAVGVILTGMGRDGAAGLLKMRHAGARTVGQNEKTCVVYGMPRVAYELGAVEQQLPLASIGEEILKLTTARKEGAD.

Residues 6-123 (RVLVVDDSPT…ARPFGDLADK (118 aa)) form the Response regulatory domain. A 4-aspartylphosphate modification is found at D57. The CheB-type methylesterase domain maps to 154–346 (YRAGRKVVAI…EEILKLTTAR (193 aa)). Active-site residues include S166, H192, and D288.

The protein belongs to the CheB family. Post-translationally, phosphorylated by CheA. Phosphorylation of the N-terminal regulatory domain activates the methylesterase activity.

The protein localises to the cytoplasm. It catalyses the reaction [protein]-L-glutamate 5-O-methyl ester + H2O = L-glutamyl-[protein] + methanol + H(+). The catalysed reaction is L-glutaminyl-[protein] + H2O = L-glutamyl-[protein] + NH4(+). Involved in chemotaxis. Part of a chemotaxis signal transduction system that modulates chemotaxis in response to various stimuli. Catalyzes the demethylation of specific methylglutamate residues introduced into the chemoreceptors (methyl-accepting chemotaxis proteins or MCP) by CheR. Also mediates the irreversible deamidation of specific glutamine residues to glutamic acid. This is Protein-glutamate methylesterase/protein-glutamine glutaminase from Agrobacterium fabrum (strain C58 / ATCC 33970) (Agrobacterium tumefaciens (strain C58)).